A 425-amino-acid chain; its full sequence is Proteinase-activated receptor 1 (425 aa).

The signal sequence occupies residues 1–21; it reads MGPRRLLLVAACFSLCGPLLS. The propeptide occupies 22–41; it reads ARTRARRPESKATNATLDPR. Asn-35, Asn-62, and Asn-75 each carry an N-linked (GlcNAc...) asparagine glycan. Over 42–102 the chain is Extracellular; that stretch reads SFLLRNPNDK…SGYLTSSWLT (61 aa). A helical membrane pass occupies residues 103–128; the sequence is LFVPSVYTGVFVVSLPLNIMAIVVFI. Residues 129–137 are Cytoplasmic-facing; that stretch reads LKMKVKKPA. A helical membrane pass occupies residues 138-157; sequence VVYMLHLATADVLFVSVLPF. At 158 to 176 the chain is on the extracellular side; the sequence is KISYYFSGSDWQFGSELCR. Cys-175 and Cys-254 are disulfide-bonded. The chain crosses the membrane as a helical span at residues 177–198; that stretch reads FVTAAFYCNMYASILLMTVISI. Residues 199-218 are Cytoplasmic-facing; the sequence is DRFLAVVYPMQSLSWRTLGR. Residues 219–239 traverse the membrane as a helical segment; it reads ASFTCLAIWALAIAGVVPLLL. At 240 to 268 the chain is on the extracellular side; it reads KEQTIQVPGLNITTCHDVLNETLLEGYYA. 2 N-linked (GlcNAc...) asparagine glycosylation sites follow: Asn-250 and Asn-259. A helical membrane pass occupies residues 269-288; it reads YYFSAFSAVFFFVPLIISTV. At 289–311 the chain is on the cytoplasmic side; the sequence is CYVSIIRCLSSSAVANRSKKSRA. The chain crosses the membrane as a helical span at residues 312-334; the sequence is LFLSAAVFCIFIICFGPTNVLLI. The Extracellular segment spans residues 335–350; sequence AHYSFLSHTSTTEAAY. The helical transmembrane segment at 351-374 threads the bilayer; sequence FAYLLCVCVSSISCCIDPLIYYYA. Over 375-425 the chain is Cytoplasmic; the sequence is SSECQRYVYSILCCKESSDPSSYNSSGQLMASKMDTCSSNLNNSIYKKLLT. Ser-418 carries the phosphoserine modification.

Belongs to the G-protein coupled receptor 1 family. In terms of processing, proteolytic cleavage by thrombin generates a new N-terminus that functions as a tethered ligand. Also proteolytically cleaved by cathepsin CTSG. Cleavage at 41-Arg-|-Ser-42 by CTSG results in receptor activation while cleavage at 55-Phe-|-Trp-56 results in inhibition of receptor activation. Phosphorylated in the C-terminal tail; probably mediating desensitization prior to the uncoupling and internalization of the receptor. Platelets and vascular endothelial cells.

The protein localises to the cell membrane. High affinity receptor that binds the activated thrombin, leading to calcium release from intracellular stores. The thrombin-activated receptor signaling pathway is mediated through PTX-insensitive G proteins, activation of phospholipase C resulting in the production of 1D-myo-inositol 1,4,5-trisphosphate (InsP3) which binds to InsP3 receptors causing calcium release from the stores. In astrocytes, the calcium released into the cytosol allows the Ca(2+)-dependent release of L-glutamate into the synaptic cleft through BEST1, that targets the neuronal postsynaptic GRIN2A/NMDAR receptor resulting in the synaptic plasticity regulation. May play a role in platelets activation and in vascular development. Mediates up-regulation of pro-inflammatory cytokines, such as MCP-1/CCL2 and IL6, triggered by coagulation factor Xa (F10) in cardiac fibroblasts and umbilical vein endothelial cells. The sequence is that of Proteinase-activated receptor 1 from Homo sapiens (Human).